Here is a 67-residue protein sequence, read N- to C-terminus: MARITVEDCLKQIPNRFELALAATYRARQLAQGHTPKIESRDKPTVVALREIASGHVGVEMLKKVPV.

This sequence belongs to the RNA polymerase subunit omega family. In terms of assembly, the RNAP catalytic core consists of 2 alpha, 1 beta, 1 beta' and 1 omega subunit. When a sigma factor is associated with the core the holoenzyme is formed, which can initiate transcription.

It catalyses the reaction RNA(n) + a ribonucleoside 5'-triphosphate = RNA(n+1) + diphosphate. Promotes RNA polymerase assembly. Latches the N- and C-terminal regions of the beta' subunit thereby facilitating its interaction with the beta and alpha subunits. The sequence is that of DNA-directed RNA polymerase subunit omega from Burkholderia ambifaria (strain MC40-6).